A 164-amino-acid polypeptide reads, in one-letter code: Thiol peroxidase (164 aa).

One can recognise a Thioredoxin domain in the interval 18–163 (VSEGQHAPDF…FDAALEAYRN (146 aa)). C60 serves as the catalytic Cysteine sulfenic acid (-SOH) intermediate. A disulfide bond links C60 and C93.

This sequence belongs to the peroxiredoxin family. Tpx subfamily. As to quaternary structure, homodimer.

It catalyses the reaction a hydroperoxide + [thioredoxin]-dithiol = an alcohol + [thioredoxin]-disulfide + H2O. In terms of biological role, thiol-specific peroxidase that catalyzes the reduction of hydrogen peroxide and organic hydroperoxides to water and alcohols, respectively. Plays a role in cell protection against oxidative stress by detoxifying peroxides. This chain is Thiol peroxidase, found in Staphylococcus haemolyticus (strain JCSC1435).